The primary structure comprises 347 residues: Ultraviolet-sensitive opsin (347 aa).

Topologically, residues 1–37 (MSGEEEFYLFKNGSIGGPWDGPQYHIAPPWAFYLQTA) are extracellular. The N-linked (GlcNAc...) asparagine glycan is linked to N12. The helical transmembrane segment at 38-58 (FMGFVFMVGTPLNAIVLVVTI) threads the bilayer. The Cytoplasmic portion of the chain corresponds to 59–69 (KYKKLRQPLNY). The chain crosses the membrane as a helical span at residues 70 to 90 (ILVNISFCGFLACIICIFTVF). Over 91-106 (VSSSQGYFVFGKHVCA) the chain is Extracellular. Cysteines 105 and 182 form a disulfide. The helical transmembrane segment at 107–127 (FEGFMGATAGLVTGWSLAFLA) threads the bilayer. Residues 128 to 147 (FERYIVICKPLGNFRFTAKH) are Cytoplasmic-facing. A helical membrane pass occupies residues 148–168 (ALVVVVATWVIGIGVAIPPFF). Residues 169–197 (GWSRYVPEGLQCSCGPDWYTVGTKYRSEY) are Extracellular-facing. The chain crosses the membrane as a helical span at residues 198 to 218 (YTWFLFIFCFIVPLSLIIFSY). The Cytoplasmic portion of the chain corresponds to 219–247 (SQLLSALRAVAAQQQESATTQKAEREVSR). A helical transmembrane segment spans residues 248-268 (MVVVMVGSFCVCYVPYAALAM). Over 269-282 (YMVNNREHGIDLRL) the chain is Extracellular. A helical transmembrane segment spans residues 283-303 (VTIPAFFSKSSCVYNPIIYCF). At K291 the chain carries N6-(retinylidene)lysine. Topologically, residues 304-347 (MNKQFRGCIMEMVCGKPMTDDSDMSSSAQRTEVSSVSSSQVSPS) are cytoplasmic. Residue C317 is the site of S-palmitoyl cysteine attachment. Residues 324–347 (DSDMSSSAQRTEVSSVSSSQVSPS) are disordered. The segment covering 328–347 (SSSAQRTEVSSVSSSQVSPS) has biased composition (low complexity).

Belongs to the G-protein coupled receptor 1 family. Opsin subfamily. Phosphorylated on some or all of the serine and threonine residues present in the C-terminal region. As to expression, cone photoreceptor cells.

Its subcellular location is the membrane. Visual pigments are the light-absorbing molecules that mediate vision. They consist of an apoprotein, opsin, covalently linked to cis-retinal. The sequence is that of Ultraviolet-sensitive opsin from Melopsittacus undulatus (Budgerigar).